The sequence spans 20 residues: Alpha-conotoxin-like ts14a (20 aa).

Disulfide bonds link cysteine 3–cysteine 16 and cysteine 14–cysteine 20.

Expressed by the venom duct.

The protein resides in the secreted. Functionally, alpha-conotoxins act on postsynaptic membranes, they bind to the nicotinic acetylcholine receptors (nAChR) and thus inhibit them. This is Alpha-conotoxin-like ts14a from Conus tessulatus (Tessellate cone).